A 643-amino-acid polypeptide reads, in one-letter code: 1-deoxy-D-xylulose-5-phosphate synthase (643 aa).

Thiamine diphosphate-binding positions include histidine 72 and 113–115 (GHA). Mg(2+) is bound at residue aspartate 144. Thiamine diphosphate-binding positions include 145 to 146 (GA), asparagine 174, tyrosine 287, and glutamate 370. Position 174 (asparagine 174) interacts with Mg(2+).

The protein belongs to the transketolase family. DXPS subfamily. Homodimer. Mg(2+) serves as cofactor. It depends on thiamine diphosphate as a cofactor.

The enzyme catalyses D-glyceraldehyde 3-phosphate + pyruvate + H(+) = 1-deoxy-D-xylulose 5-phosphate + CO2. It participates in metabolic intermediate biosynthesis; 1-deoxy-D-xylulose 5-phosphate biosynthesis; 1-deoxy-D-xylulose 5-phosphate from D-glyceraldehyde 3-phosphate and pyruvate: step 1/1. Functionally, catalyzes the acyloin condensation reaction between C atoms 2 and 3 of pyruvate and glyceraldehyde 3-phosphate to yield 1-deoxy-D-xylulose-5-phosphate (DXP). The polypeptide is 1-deoxy-D-xylulose-5-phosphate synthase (Prochlorococcus marinus (strain MIT 9211)).